The sequence spans 342 residues: Cytosolic Fe-S cluster assembly factor NBP35 (342 aa).

A disordered region spans residues 16–42 (SKAAPKLVAPEPEHCPGPESEQAGKGD). 4 residues coordinate [4Fe-4S] cluster: cysteine 30, cysteine 44, cysteine 47, and cysteine 53. Residue 83–90 (GKGGVGKS) participates in ATP binding. [4Fe-4S] cluster is bound by residues cysteine 256 and cysteine 259.

This sequence belongs to the Mrp/NBP35 ATP-binding proteins family. NUBP1/NBP35 subfamily. Heterotetramer of 2 NBP35 and 2 CFD1 chains. It depends on [4Fe-4S] cluster as a cofactor.

Its subcellular location is the cytoplasm. Component of the cytosolic iron-sulfur (Fe/S) protein assembly (CIA) machinery. Required for maturation of extramitochondrial Fe-S proteins. The NBP35-CFD1 heterotetramer forms a Fe-S scaffold complex, mediating the de novo assembly of an Fe-S cluster and its transfer to target apoproteins. This Coccidioides immitis (strain RS) (Valley fever fungus) protein is Cytosolic Fe-S cluster assembly factor NBP35.